Here is a 165-residue protein sequence, read N- to C-terminus: Large ribosomal subunit protein bL17 (165 aa).

Residues Gln-138–Asp-158 are compositionally biased toward basic and acidic residues. A disordered region spans residues Gln-138 to Lys-165.

This sequence belongs to the bacterial ribosomal protein bL17 family. In terms of assembly, part of the 50S ribosomal subunit. Contacts protein L32.

The protein is Large ribosomal subunit protein bL17 of Leptospira borgpetersenii serovar Hardjo-bovis (strain JB197).